The following is a 100-amino-acid chain: Urease subunit gamma (100 aa).

It belongs to the urease gamma subunit family. Heterotrimer of UreA (gamma), UreB (beta) and UreC (alpha) subunits. Three heterotrimers associate to form the active enzyme.

It is found in the cytoplasm. It catalyses the reaction urea + 2 H2O + H(+) = hydrogencarbonate + 2 NH4(+). It functions in the pathway nitrogen metabolism; urea degradation; CO(2) and NH(3) from urea (urease route): step 1/1. This Agrobacterium fabrum (strain C58 / ATCC 33970) (Agrobacterium tumefaciens (strain C58)) protein is Urease subunit gamma.